The following is an 86-amino-acid chain: Small ribosomal subunit protein bS16 (86 aa).

It belongs to the bacterial ribosomal protein bS16 family.

The chain is Small ribosomal subunit protein bS16 from Myxococcus xanthus (strain DK1622).